Reading from the N-terminus, the 146-residue chain is Histone H2A.1 (146 aa).

Residues 118–146 form a disordered region; it reads SPAAAEKEAKSPKKKTSTKSPKKKVAAKE. Short sequence motifs (SPKK motif) lie at residues 128–131 and 137–140; these read SPKK. Residues 129-146 show a composition bias toward basic residues; it reads PKKKTSTKSPKKKVAAKE.

It belongs to the histone H2A family. As to quaternary structure, the nucleosome is a histone octamer containing two molecules each of H2A, H2B, H3 and H4 assembled in one H3-H4 heterotetramer and two H2A-H2B heterodimers. The octamer wraps approximately 147 bp of DNA. Post-translationally, phosphorylated within its C-terminal part, probably at the SPKK motifs. Expressed preferentially in meristematic tissues of young seedlings, in stigma and ovary but not in pollen.

It is found in the nucleus. Its subcellular location is the chromosome. Functionally, core component of nucleosome. Nucleosomes wrap and compact DNA into chromatin, limiting DNA accessibility to the cellular machineries which require DNA as a template. Histones thereby play a central role in transcription regulation, DNA repair, DNA replication and chromosomal stability. DNA accessibility is regulated via a complex set of post-translational modifications of histones, also called histone code, and nucleosome remodeling. In Triticum aestivum (Wheat), this protein is Histone H2A.1 (H2A-9).